A 95-amino-acid polypeptide reads, in one-letter code: Oxytetracycline polyketide synthase acyl carrier protein (95 aa).

Residues 3-81 (LLTLSDLLTL…ALIEMTNASL (79 aa)) enclose the Carrier domain. The residue at position 41 (Ser-41) is an O-(pantetheine 4'-phosphoryl)serine.

In terms of processing, 4'-phosphopantetheine is transferred from CoA to a specific serine of the apo-ACP-like protein.

The protein operates within antibiotic biosynthesis; oxytetracycline biosynthesis. Functionally, acyl carrier protein. This is Oxytetracycline polyketide synthase acyl carrier protein from Streptomyces rimosus.